The following is a 217-amino-acid chain: UPF0323 lipoprotein HPP12_0232 (217 aa).

Residues 1 to 27 (MKKPYRKISDYAIVGGLSALVMVSIVG) form the signal peptide. Residue cysteine 28 is the site of N-palmitoyl cysteine attachment. Cysteine 28 is lipidated: S-diacylglycerol cysteine. The span at 160-171 (QRTYKSPQAYQR) shows a compositional bias: polar residues. A disordered region spans residues 160-217 (QRTYKSPQAYQRSQNSFSKSAPSASSMGTASKGQSGFFGSSRPTSSPAISSGTRGFNS). Positions 172–185 (SQNSFSKSAPSASS) are enriched in low complexity. Positions 186 to 197 (MGTASKGQSGFF) are enriched in polar residues. Over residues 199–210 (SSRPTSSPAISS) the composition is skewed to low complexity.

This sequence belongs to the UPF0323 family.

The protein resides in the cell membrane. This is UPF0323 lipoprotein HPP12_0232 from Helicobacter pylori (strain P12).